A 392-amino-acid polypeptide reads, in one-letter code: ATP phosphoribosyltransferase regulatory subunit (392 aa).

This sequence belongs to the class-II aminoacyl-tRNA synthetase family. HisZ subfamily. As to quaternary structure, heteromultimer composed of HisG and HisZ subunits.

The protein localises to the cytoplasm. Its pathway is amino-acid biosynthesis; L-histidine biosynthesis; L-histidine from 5-phospho-alpha-D-ribose 1-diphosphate: step 1/9. Functionally, required for the first step of histidine biosynthesis. May allow the feedback regulation of ATP phosphoribosyltransferase activity by histidine. This Prochlorococcus marinus (strain MIT 9303) protein is ATP phosphoribosyltransferase regulatory subunit.